Consider the following 432-residue polypeptide: Histidinol dehydrogenase (432 aa).

Substrate-binding residues include S240, Q262, and H265. Residues Q262 and H265 each coordinate Zn(2+). Residues E330 and H331 each act as proton acceptor in the active site. H331, D364, E418, and H423 together coordinate substrate. D364 is a binding site for Zn(2+). H423 contributes to the Zn(2+) binding site.

It belongs to the histidinol dehydrogenase family. Zn(2+) serves as cofactor.

It catalyses the reaction L-histidinol + 2 NAD(+) + H2O = L-histidine + 2 NADH + 3 H(+). The protein operates within amino-acid biosynthesis; L-histidine biosynthesis; L-histidine from 5-phospho-alpha-D-ribose 1-diphosphate: step 9/9. In terms of biological role, catalyzes the sequential NAD-dependent oxidations of L-histidinol to L-histidinaldehyde and then to L-histidine. The polypeptide is Histidinol dehydrogenase (Wolinella succinogenes (strain ATCC 29543 / DSM 1740 / CCUG 13145 / JCM 31913 / LMG 7466 / NCTC 11488 / FDC 602W) (Vibrio succinogenes)).